The chain runs to 365 residues: Tetraacyldisaccharide 4'-kinase (365 aa).

Residue 68–75 coordinates ATP; that stretch reads VVGGAGKT.

It belongs to the LpxK family.

The enzyme catalyses a lipid A disaccharide + ATP = a lipid IVA + ADP + H(+). It functions in the pathway glycolipid biosynthesis; lipid IV(A) biosynthesis; lipid IV(A) from (3R)-3-hydroxytetradecanoyl-[acyl-carrier-protein] and UDP-N-acetyl-alpha-D-glucosamine: step 6/6. In terms of biological role, transfers the gamma-phosphate of ATP to the 4'-position of a tetraacyldisaccharide 1-phosphate intermediate (termed DS-1-P) to form tetraacyldisaccharide 1,4'-bis-phosphate (lipid IVA). The sequence is that of Tetraacyldisaccharide 4'-kinase from Chlamydia pneumoniae (Chlamydophila pneumoniae).